A 417-amino-acid chain; its full sequence is Serine hydroxymethyltransferase (417 aa).

Residues leucine 121 and 125-127 each bind (6S)-5,6,7,8-tetrahydrofolate; that span reads GHL. Lysine 229 is subject to N6-(pyridoxal phosphate)lysine. 355–357 serves as a coordination point for (6S)-5,6,7,8-tetrahydrofolate; that stretch reads SPF.

The protein belongs to the SHMT family. In terms of assembly, homodimer. Pyridoxal 5'-phosphate is required as a cofactor.

The protein resides in the cytoplasm. It carries out the reaction (6R)-5,10-methylene-5,6,7,8-tetrahydrofolate + glycine + H2O = (6S)-5,6,7,8-tetrahydrofolate + L-serine. It functions in the pathway one-carbon metabolism; tetrahydrofolate interconversion. The protein operates within amino-acid biosynthesis; glycine biosynthesis; glycine from L-serine: step 1/1. Its function is as follows. Catalyzes the reversible interconversion of serine and glycine with tetrahydrofolate (THF) serving as the one-carbon carrier. This reaction serves as the major source of one-carbon groups required for the biosynthesis of purines, thymidylate, methionine, and other important biomolecules. Also exhibits THF-independent aldolase activity toward beta-hydroxyamino acids, producing glycine and aldehydes, via a retro-aldol mechanism. This is Serine hydroxymethyltransferase from Shewanella baltica (strain OS223).